Consider the following 140-residue polypeptide: Midkine (140 aa).

An N-terminal signal peptide occupies residues 1–20; it reads MQHRSFFLLALVALLAVTTA. 5 disulfide bridges follow: Cys34–Cys58, Cys42–Cys67, Cys49–Cys71, Cys81–Cys113, and Cys91–Cys123.

It belongs to the pleiotrophin family. In terms of assembly, homodimer. Interacts with ALK. Interacts with LRP1; promotes neuronal survival. Interacts with LRP2. Interacts with NCAM1. Interacts (via C-terminal) with PTPRZ1 (via chondroitin sulfate chains); this interaction is inhibited by PTN; this interaction promotes neuronal migration. Interacts with NCL; this interaction promotes NCL clustering and lateral movements of this complex into lipid rafts leading to MDK internalization. Interacts with LRP6 and LRP8: this interaction is calcium dependent. Interacts with ITGA4. Interacts with ITGA6. Interacts with ITGB1. Interacts with ITGA4:ITGB1 complex; this interaction mediates MDK-induced osteoblast cells migration through PXN phosphorylation. Interacts with ITGA6:ITGB1 complex; this interaction mediates MDK-induced neurite outgrowth. Interacts with NOTCH2; this interactio mediates a nuclear accumulation of NOTCH2 and therefore activation of NOTCH2 signaling leading to interaction between HES1 and STAT3. Interacts with GPC2 (via heparan sulfate chain); this interaction is inhibited by heparin followed by chondroitin sulfate E; this interaction induces GPC2 clustering through heparan sulfate chain; this interaction induces neuronal cell adhesion and neurite outgrowth. Interacts with SDC3; this interaction induces SDC3 clustering; this interaction induces neuronal cell adhesion and neurite outgrowth. Interacts with SDC1. Interacts with CSPG5; this interaction promotes elongation of oligodendroglial precursor-like cells. As to expression, expressed at a low level in arteries, and at higher levels in newly formed neointima. In brain, expressed in the caudate nucleus and the brain stem.

Its subcellular location is the secreted. Developmentally regulated, secreted growth factor homologous to pleiotrophin (PTN), which has heparin binding activity. Binds anaplastic lymphoma kinase (ALK) which induces ALK activation and subsequent phosphorylation of the insulin receptor substrate (IRS1), followed by the activation of mitogen-activated protein kinase (MAPK) and PI3-kinase, and the induction of cell proliferation. Involved in neointima formation after arterial injury, possibly by mediating leukocyte recruitment. Also involved in early fetal adrenal gland development. Its function is as follows. Secreted protein that functions as a cytokine and growth factor and mediates its signal through cell-surface proteoglycan and non-proteoglycan receptors. Binds cell-surface proteoglycan receptors via their chondroitin sulfate (CS) groups. Thereby regulates many processes like inflammatory response, cell proliferation, cell adhesion, cell growth, cell survival, tissue regeneration, cell differentiation and cell migration. Participates in inflammatory processes by exerting two different activities. Firstly, mediates neutrophils and macrophages recruitment to the sites of inflammation both by direct action by cooperating namely with ITGB2 via LRP1 and by inducing chemokine expression. This inflammation can be accompanied by epithelial cell survival and smooth muscle cell migration after renal and vessel damage, respectively. Secondly, suppresses the development of tolerogenic dendric cells thereby inhibiting the differentiation of regulatory T cells and also promote T cell expansion through NFAT signaling and Th1 cell differentiation. Promotes tissue regeneration after injury or trauma. After heart damage negatively regulates the recruitment of inflammatory cells and mediates cell survival through activation of anti-apoptotic signaling pathways via MAPKs and AKT pathways through the activation of angiogenesis. Also facilitates liver regeneration as well as bone repair by recruiting macrophage at trauma site and by promoting cartilage development by facilitating chondrocyte differentiation. Plays a role in brain by promoting neural precursor cells survival and growth through interaction with heparan sulfate proteoglycans. Binds PTPRZ1 and promotes neuronal migration and embryonic neurons survival. Binds SDC3 or GPC2 and mediates neurite outgrowth and cell adhesion. Binds chondroitin sulfate E and heparin leading to inhibition of neuronal cell adhesion induced by binding with GPC2. Binds CSPG5 and promotes elongation of oligodendroglial precursor-like cells. Also binds ITGA6:ITGB1 complex; this interaction mediates MDK-induced neurite outgrowth. Binds LRP1; promotes neuronal survival. Binds ITGA4:ITGB1 complex; this interaction mediates MDK-induced osteoblast cells migration through PXN phosphorylation. Binds anaplastic lymphoma kinase (ALK) which induces ALK activation and subsequent phosphorylation of the insulin receptor substrate (IRS1), followed by the activation of mitogen-activated protein kinase (MAPK) and PI3-kinase, and the induction of cell proliferation. Promotes epithelial to mesenchymal transition through interaction with NOTCH2. During arteriogenesis, plays a role in vascular endothelial cell proliferation by inducing VEGFA expression and release which in turn induces nitric oxide synthase expression. Moreover activates vasodilation through nitric oxide synthase activation. Negatively regulates bone formation in response to mechanical load by inhibiting Wnt/beta-catenin signaling in osteoblasts. In addition plays a role in hippocampal development, working memory, auditory response, early fetal adrenal gland development and the female reproductive system. The sequence is that of Midkine from Rattus norvegicus (Rat).